A 52-amino-acid polypeptide reads, in one-letter code: Large ribosomal subunit protein bL32c (52 aa).

This sequence belongs to the bacterial ribosomal protein bL32 family.

Its subcellular location is the plastid. The protein localises to the chloroplast. This Capsella bursa-pastoris (Shepherd's purse) protein is Large ribosomal subunit protein bL32c.